A 430-amino-acid polypeptide reads, in one-letter code: Ribosomal protein uS12 methylthiotransferase RimO (430 aa).

The 118-residue stretch at 2 to 119 (ISVYSISLGC…WPAMLAHALK (118 aa)) folds into the MTTase N-terminal domain. Positions 11, 46, 81, 145, 149, and 152 each coordinate [4Fe-4S] cluster. The Radical SAM core domain maps to 131–361 (STGPSYAWLK…MEVQAEISEE (231 aa)). One can recognise a TRAM domain in the interval 364-430 (AVHEGTRQQV…TRTYDLVALV (67 aa)).

It belongs to the methylthiotransferase family. RimO subfamily. [4Fe-4S] cluster serves as cofactor.

Its subcellular location is the cytoplasm. It catalyses the reaction L-aspartate(89)-[ribosomal protein uS12]-hydrogen + (sulfur carrier)-SH + AH2 + 2 S-adenosyl-L-methionine = 3-methylsulfanyl-L-aspartate(89)-[ribosomal protein uS12]-hydrogen + (sulfur carrier)-H + 5'-deoxyadenosine + L-methionine + A + S-adenosyl-L-homocysteine + 2 H(+). Catalyzes the methylthiolation of an aspartic acid residue of ribosomal protein uS12. The chain is Ribosomal protein uS12 methylthiotransferase RimO from Nitratidesulfovibrio vulgaris (strain DP4) (Desulfovibrio vulgaris).